The chain runs to 176 residues: Interleukin-7 (176 aa).

The N-terminal stretch at 1-25 is a signal peptide; the sequence is MFHVSFRYIFGIPPLILVLLPVASS. Cystine bridges form between Cys-27–Cys-165, Cys-58–Cys-153, and Cys-71–Cys-116. N-linked (GlcNAc...) asparagine glycans are attached at residues Asn-94, Asn-115, and Asn-140.

This sequence belongs to the IL-7/IL-9 family.

It is found in the secreted. Functionally, hematopoietic growth factor capable of stimulating the proliferation of lymphoid progenitors. It is important for proliferation during certain stages of B-cell maturation. The sequence is that of Interleukin-7 (IL7) from Sus scrofa (Pig).